The primary structure comprises 128 residues: Large ribosomal subunit protein bL17 (128 aa).

It belongs to the bacterial ribosomal protein bL17 family. As to quaternary structure, part of the 50S ribosomal subunit. Contacts protein L32.

The protein is Large ribosomal subunit protein bL17 of Pseudomonas entomophila (strain L48).